The primary structure comprises 167 residues: Centrin-3 (167 aa).

4 consecutive EF-hand domains span residues 25-60, 61-96, 98-133, and 134-167; these read EQKQEIKDAFELFDTDKDQAIDYHELKVAMRALGFD, VKKADVLKILKDYDREATGKITFEDFNEVVTDWILE, DPHEEILKAFKLFDDDDSGKISLRNLRRVARELGEN, and MSDEELRAMIEEFDKDGDGEINQEEFIAIMTGDI. Ca(2+) contacts are provided by Asp-38, Asp-40, Asp-42, and Glu-49. Ser-135 is modified (phosphoserine). Ca(2+) contacts are provided by Asp-147, Asp-149, Asp-151, Glu-153, and Glu-158.

The protein belongs to the centrin family. As to quaternary structure, monomer. Component of the TREX-2 complex (transcription and export complex 2), composed of at least ENY2, GANP, PCID2, SEM1, and either centrin CETN2 or CETN3. Interacts with USP49.

The protein localises to the cytoplasm. It localises to the cytoskeleton. The protein resides in the microtubule organizing center. Its subcellular location is the centrosome. It is found in the nucleus. The protein localises to the nucleolus. It localises to the nucleus envelope. The protein resides in the nuclear pore complex. Its subcellular location is the centriole. In terms of biological role, plays a fundamental role in microtubule-organizing center structure and function. Functionally, as a component of the TREX-2 complex, involved in the export of mRNAs to the cytoplasm through the nuclear pores. The chain is Centrin-3 (Cetn3) from Mus musculus (Mouse).